We begin with the raw amino-acid sequence, 313 residues long: Phosphoenolpyruvate phosphomutase (313 aa).

Aspartate 69 acts as the Nucleophile in catalysis.

Belongs to the isocitrate lyase/PEP mutase superfamily. PEP mutase family.

The enzyme catalyses phosphoenolpyruvate + H(+) = 3-phosphonopyruvate. It functions in the pathway secondary metabolite biosynthesis; bialaphos biosynthesis. Its function is as follows. Formation of a carbon-phosphorus bond by converting phosphoenolpyruvate (PEP) to phosphonopyruvate (P-Pyr). The polypeptide is Phosphoenolpyruvate phosphomutase (bcpB) (Streptomyces hygroscopicus).